Reading from the N-terminus, the 350-residue chain is S-adenosylmethionine:tRNA ribosyltransferase-isomerase (350 aa).

It belongs to the QueA family. In terms of assembly, monomer.

It localises to the cytoplasm. It carries out the reaction 7-aminomethyl-7-carbaguanosine(34) in tRNA + S-adenosyl-L-methionine = epoxyqueuosine(34) in tRNA + adenine + L-methionine + 2 H(+). Its pathway is tRNA modification; tRNA-queuosine biosynthesis. Its function is as follows. Transfers and isomerizes the ribose moiety from AdoMet to the 7-aminomethyl group of 7-deazaguanine (preQ1-tRNA) to give epoxyqueuosine (oQ-tRNA). The polypeptide is S-adenosylmethionine:tRNA ribosyltransferase-isomerase (Vibrio vulnificus (strain CMCP6)).